A 122-amino-acid polypeptide reads, in one-letter code: MARIAGVDLPKKKRIEYALTYIYGIGLKTSRDILSAVNISLDKRVQELSEDEVSLISKKIQESYAVEGDLRKKVTMDIKALMDLGSYRGLRHRKGLPVRGQTTKNNARTRKGKRKTVGSASK.

The disordered stretch occupies residues 93–122 (RKGLPVRGQTTKNNARTRKGKRKTVGSASK). Residues 107–116 (ARTRKGKRKT) are compositionally biased toward basic residues.

It belongs to the universal ribosomal protein uS13 family. As to quaternary structure, part of the 30S ribosomal subunit. Forms a loose heterodimer with protein S19. Forms two bridges to the 50S subunit in the 70S ribosome.

In terms of biological role, located at the top of the head of the 30S subunit, it contacts several helices of the 16S rRNA. In the 70S ribosome it contacts the 23S rRNA (bridge B1a) and protein L5 of the 50S subunit (bridge B1b), connecting the 2 subunits; these bridges are implicated in subunit movement. Contacts the tRNAs in the A and P-sites. This chain is Small ribosomal subunit protein uS13, found in Wolinella succinogenes (strain ATCC 29543 / DSM 1740 / CCUG 13145 / JCM 31913 / LMG 7466 / NCTC 11488 / FDC 602W) (Vibrio succinogenes).